A 192-amino-acid polypeptide reads, in one-letter code: uncharacterized protein (192 aa).

Residues 1-17 (MFKKILFPLVALFMLAG) form the signal peptide. Residue cysteine 18 is the site of N-palmitoyl cysteine attachment. A lipid anchor (S-diacylglycerol cysteine) is attached at cysteine 18.

It to H.influenzae HI_0162.

The protein localises to the cell membrane. This is an uncharacterized protein from Escherichia coli O6:H1 (strain CFT073 / ATCC 700928 / UPEC).